The primary structure comprises 153 residues: MEKLDKLSEAFKALLKQEKFGSQSEIVTALQELGFENINQSKVSRMLSKFGAVRTRNTKMEMVYQLPAELGVPTTSSPLKNLVVDIDHNDVLIVVKTSPGAAQLIARLLDSMGKSGGILGTIAGDDTIFITPTKVTPVEVLMQNVTELFESSF.

Belongs to the ArgR family.

It localises to the cytoplasm. It functions in the pathway amino-acid biosynthesis; L-arginine biosynthesis [regulation]. Its function is as follows. Regulates arginine biosynthesis genes. The sequence is that of Arginine repressor from Actinobacillus pleuropneumoniae serotype 3 (strain JL03).